The chain runs to 356 residues: Tungsten-containing aldehyde ferredoxin oxidoreductase cofactor-modifying protein (356 aa).

The Radical SAM core domain maps to 1–214 (MKYLYLEITS…PIVNELYKIA (214 aa)). Positions 12, 16, and 19 each coordinate [4Fe-4S] cluster.

Belongs to the radical SAM superfamily. The cofactor is [4Fe-4S] cluster.

In terms of biological role, involved in the biosynthesis of a molybdopterin-based tungsten cofactor. This is Tungsten-containing aldehyde ferredoxin oxidoreductase cofactor-modifying protein (cmo) from Pyrococcus furiosus (strain ATCC 43587 / DSM 3638 / JCM 8422 / Vc1).